The primary structure comprises 366 residues: Glutamate 5-kinase (366 aa).

Lysine 17 is a binding site for ATP. Substrate is bound by residues serine 57, aspartate 144, and asparagine 156. Residues 176–177 and 216–222 contribute to the ATP site; these read SD and TGGMVSK. The PUA domain maps to 278–356; it reads SGALTLDDGA…SDLPAEMRRP (79 aa).

Belongs to the glutamate 5-kinase family.

The protein resides in the cytoplasm. It catalyses the reaction L-glutamate + ATP = L-glutamyl 5-phosphate + ADP. It participates in amino-acid biosynthesis; L-proline biosynthesis; L-glutamate 5-semialdehyde from L-glutamate: step 1/2. Its function is as follows. Catalyzes the transfer of a phosphate group to glutamate to form L-glutamate 5-phosphate. The chain is Glutamate 5-kinase from Mycolicibacterium vanbaalenii (strain DSM 7251 / JCM 13017 / BCRC 16820 / KCTC 9966 / NRRL B-24157 / PYR-1) (Mycobacterium vanbaalenii).